The chain runs to 75 residues: Small ribosomal subunit protein bS18 (75 aa).

Belongs to the bacterial ribosomal protein bS18 family. Part of the 30S ribosomal subunit. Forms a tight heterodimer with protein bS6.

In terms of biological role, binds as a heterodimer with protein bS6 to the central domain of the 16S rRNA, where it helps stabilize the platform of the 30S subunit. This is Small ribosomal subunit protein bS18 from Cereibacter sphaeroides (strain ATCC 17029 / ATH 2.4.9) (Rhodobacter sphaeroides).